A 420-amino-acid chain; its full sequence is Probable endo-beta-1,4-glucanase celB (420 aa).

Positions 1–18 (MLRKLTPLALALLPLVAG) are cleaved as a signal peptide. An N-linked (GlcNAc...) asparagine glycan is attached at Asn-118. The active-site Nucleophile is the Glu-215. Glu-220 functions as the Proton donor in the catalytic mechanism. Asn-234, Asn-293, and Asn-383 each carry an N-linked (GlcNAc...) asparagine glycan.

This sequence belongs to the glycosyl hydrolase 7 (cellulase C) family.

The protein resides in the secreted. The catalysed reaction is Endohydrolysis of (1-&gt;4)-beta-D-glucosidic linkages in cellulose, lichenin and cereal beta-D-glucans.. Its function is as follows. Has endoglucanase activity on substrates containing beta-1,4 glycosidic bonds, like in carboxymethylcellulose (CMC), hydroxyethylcellulose (HEC) and beta-glucan. Involved in the degradation of complex natural cellulosic substrates. The protein is Probable endo-beta-1,4-glucanase celB (celB) of Aspergillus terreus (strain NIH 2624 / FGSC A1156).